The following is a 193-amino-acid chain: MTQPLLLASTSPFRKVLLDKFQYPFETANPNTDESSFSGESAEALVQRLAEQKAKACGNNYPEHLIIGSDQVCVINGKIIGKPHTVENACLQLKAASGQIVTFYTGLCLYNAKTGQSDVICEPFHVHFRQLTEQEIERYIEREMPLYCAGSFMCEGLGIALFNKLEGRDPNTLIGLPLIALREMLEKQGISIL.

Aspartate 70 acts as the Proton acceptor in catalysis.

It belongs to the Maf family. YceF subfamily. Requires a divalent metal cation as cofactor.

The protein localises to the cytoplasm. It catalyses the reaction N(7)-methyl-GTP + H2O = N(7)-methyl-GMP + diphosphate + H(+). Functionally, nucleoside triphosphate pyrophosphatase that hydrolyzes 7-methyl-GTP (m(7)GTP). May have a dual role in cell division arrest and in preventing the incorporation of modified nucleotides into cellular nucleic acids. The sequence is that of 7-methyl-GTP pyrophosphatase from Photobacterium profundum (strain SS9).